Here is a 427-residue protein sequence, read N- to C-terminus: UDP-N-acetylglucosamine 1-carboxyvinyltransferase 1 (427 aa).

Lysine 23–asparagine 24 lines the phosphoenolpyruvate pocket. Arginine 96 is a binding site for UDP-N-acetyl-alpha-D-glucosamine. Cysteine 120 acts as the Proton donor in catalysis. The residue at position 120 (cysteine 120) is a 2-(S-cysteinyl)pyruvic acid O-phosphothioketal. Residues arginine 125–leucine 129, aspartate 309, and valine 331 each bind UDP-N-acetyl-alpha-D-glucosamine.

Belongs to the EPSP synthase family. MurA subfamily.

The protein resides in the cytoplasm. The enzyme catalyses phosphoenolpyruvate + UDP-N-acetyl-alpha-D-glucosamine = UDP-N-acetyl-3-O-(1-carboxyvinyl)-alpha-D-glucosamine + phosphate. It participates in cell wall biogenesis; peptidoglycan biosynthesis. In terms of biological role, cell wall formation. Adds enolpyruvyl to UDP-N-acetylglucosamine. The protein is UDP-N-acetylglucosamine 1-carboxyvinyltransferase 1 of Streptococcus pneumoniae (strain ATCC BAA-255 / R6).